A 351-amino-acid chain; its full sequence is MNPPKSAPDAQGLSYRDAGVDIDAGDALIDKIKPFAKKTLRDGVLGGIGGFGALFEVPKKYKEPVLVSGTDGVGTKLKLAFHLNKHDTVGQDLVAMSVNDILVQGAEPLFFLDYFACGKLDVDTAATVVKGIAQGCELSGCALIGGETAEMPGMYPDGEYDLAGFAVGAVEKSKIIDGSTIAEGDVVLGLASSGIHSNGFSLVRKIIERANPDLSADFHGRSLADALMAPTRIYVKPLLALMQKLTVKGMAHITGGGLVENIPRVLREGLTAELDQDAWPLPPLFKWLQEHGGVADAEMHRVFNCGIGMAVIVSAADADAAIADLTAAGEQVWKIGTVRATREGEAQTVVV.

It belongs to the AIR synthase family.

The protein localises to the cytoplasm. It carries out the reaction 2-formamido-N(1)-(5-O-phospho-beta-D-ribosyl)acetamidine + ATP = 5-amino-1-(5-phospho-beta-D-ribosyl)imidazole + ADP + phosphate + H(+). It functions in the pathway purine metabolism; IMP biosynthesis via de novo pathway; 5-amino-1-(5-phospho-D-ribosyl)imidazole from N(2)-formyl-N(1)-(5-phospho-D-ribosyl)glycinamide: step 2/2. This is Phosphoribosylformylglycinamidine cyclo-ligase from Burkholderia lata (strain ATCC 17760 / DSM 23089 / LMG 22485 / NCIMB 9086 / R18194 / 383).